The chain runs to 398 residues: Inner membrane protein YjgN (398 aa).

At 1–24 (MAQVINEMDVPSHSFVFHGTGERY) the chain is on the cytoplasmic side. The helical transmembrane segment at 25 to 45 (FLICVVNVLLTIITLGIYLPW) threads the bilayer. Residues 46–73 (ALMKCKRYLYANMEVNGQRFSYGITGGN) lie on the Periplasmic side of the membrane. Residues 74–94 (VFVSCLFFVFFYFAILMTVSA) traverse the membrane as a helical segment. Residue Asp-95 is a topological domain, cytoplasmic. Residues 96–116 (MPLVGCVLTLLLLVLLIFMAA) traverse the membrane as a helical segment. The Periplasmic segment spans residues 117-142 (KGLRHQALMTSLNGVRFSFNCSMKGF). The chain crosses the membrane as a helical span at residues 143 to 163 (WWVTFFLPILMAIGMGTVFFI). Topologically, residues 164–175 (STKMLPANSSSS) are cytoplasmic. Residues 176-196 (VIISMVLMAIVGIVSIGIFNG) form a helical membrane-spanning segment. Over 197–228 (TLYSLVMSFLWSNTSFGIHRFKVKLDTTYCIK) the chain is Periplasmic. The helical transmembrane segment at 229–249 (YAILAFLALLPFLAVAGYIIF) threads the bilayer. Residues 250–278 (DQILNAYDSSVYANDDIENLQQFMEMQRK) are Cytoplasmic-facing. A helical membrane pass occupies residues 279-299 (MIIAQLIYYFGIAVSTSYLTV). Residues 300–333 (SLRNHFMSNLSLNDGRIRFRLTLTYHGMLYRMCA) are Periplasmic-facing. Residues 334–354 (LVVISGITGGLAYPLLKIWMI) traverse the membrane as a helical segment. Residues 355–398 (DWQAKNTYLLGDLDDLPLINKEEQPDKGFLASISRGVMPSLPFL) are Cytoplasmic-facing.

It localises to the cell inner membrane. The polypeptide is Inner membrane protein YjgN (yjgN) (Escherichia coli (strain K12)).